We begin with the raw amino-acid sequence, 453 residues long: Proton extrusion protein PxcA (453 aa).

Residues serine 147–threonine 189 form a disordered region. Positions threonine 154 to threonine 163 are enriched in polar residues. Over residues asparagine 164 to serine 175 the composition is skewed to low complexity. The span at glycine 176–threonine 189 shows a compositional bias: polar residues. 4 helical membrane passes run phenylalanine 235–leucine 255, serine 330–serine 350, leucine 377–isoleucine 397, and phenylalanine 413–isoleucine 433.

It belongs to the CemA family.

Its subcellular location is the cell inner membrane. Its function is as follows. Required for H(+) efflux immediately after light irradiation to form a rapid H(+) concentration gradient across the thylakoid membranes. Together with PxcL, contributes to transient H(+) uptake following dark to light transition. The protein is Proton extrusion protein PxcA of Crocosphaera subtropica (strain ATCC 51142 / BH68) (Cyanothece sp. (strain ATCC 51142)).